Here is a 222-residue protein sequence, read N- to C-terminus: Chorionic somatomammotropin hormone-like 1 (222 aa).

The first 26 residues, 1–26 (MAAGSRTSLLLAFALLCLPWLQEAGA), serve as a signal peptide directing secretion. H44 and E205 together coordinate Zn(2+). Cysteines 213 and 220 form a disulfide.

This sequence belongs to the somatotropin/prolactin family.

The protein localises to the secreted. In terms of biological role, may be a novel gestational hormone required to compensate for absence of other members of the GH/CS cluster during gestation. This chain is Chorionic somatomammotropin hormone-like 1 (CSHL1), found in Homo sapiens (Human).